The sequence spans 282 residues: Cytochrome c1 (282 aa).

The N-terminal stretch at 1 to 24 (MTIKLRFVASLALVFGLAAASVPA) is a signal peptide. Residues cysteine 62, cysteine 65, histidine 66, and methionine 207 each coordinate heme c. Residues 253 to 273 (WWVLGFLVIFTGLLVATKIVV) traverse the membrane as a helical segment.

As to quaternary structure, the main subunits of complex b-c1 are: cytochrome b, cytochrome c1 and the Rieske protein. Post-translationally, binds 1 heme c group covalently per subunit.

The protein localises to the cell membrane. Functionally, component of the ubiquinol-cytochrome c reductase complex (complex III or cytochrome b-c1 complex), which is a respiratory chain that generates an electrochemical potential coupled to ATP synthesis. c1 functions as an electron donor to cytochrome c. In Blastochloris viridis (Rhodopseudomonas viridis), this protein is Cytochrome c1 (petC).